A 154-amino-acid chain; its full sequence is Small ribosomal subunit protein uS13 (154 aa).

The protein belongs to the universal ribosomal protein uS13 family.

It is found in the cytoplasm. Functionally, located at the top of the head of the 40S subunit, it contacts several helices of the 18S rRNA. The sequence is that of Small ribosomal subunit protein uS13 (rps18) from Dictyostelium discoideum (Social amoeba).